Here is a 162-residue protein sequence, read N- to C-terminus: uncharacterized protein (162 aa).

The next 4 helical transmembrane spans lie at 15–35, 43–63, 70–90, and 97–117; these read VLAI…APAL, VCHF…FDLS, LTIL…QSFL, and LFDI…NILY.

The protein resides in the membrane. This is an uncharacterized protein from Schizosaccharomyces pombe (strain 972 / ATCC 24843) (Fission yeast).